The following is a 403-amino-acid chain: Large ribosomal subunit protein uL3 (403 aa).

A disordered region spans residues 1 to 38; that stretch reads MSHRKFSAPRHGSLGFLPRKRSSRHRGKVKSFPKDDSS. The residue at position 13 (serine 13) is a Phosphoserine. Basic residues predominate over residues 18–31; the sequence is PRKRSSRHRGKVKS. Residue lysine 39 forms a Glycyl lysine isopeptide (Lys-Gly) (interchain with G-Cter in SUMO2) linkage. Lysine 136 carries the post-translational modification N6-acetyllysine. Residues lysine 224 and lysine 226 each participate in a glycyl lysine isopeptide (Lys-Gly) (interchain with G-Cter in SUMO2) cross-link. Position 245 is a tele-methylhistidine (histidine 245). Lysine 286 and lysine 294 each carry N6-acetyllysine; alternate. Lysine 286 is covalently cross-linked (Glycyl lysine isopeptide (Lys-Gly) (interchain with G-Cter in SUMO2); alternate). A Glycyl lysine isopeptide (Lys-Gly) (interchain with G-Cter in SUMO1); alternate cross-link involves residue lysine 294. Serine 304 carries the post-translational modification Phosphoserine. At lysine 366 the chain carries N6-acetyllysine; alternate. Residue lysine 366 forms a Glycyl lysine isopeptide (Lys-Gly) (interchain with G-Cter in SUMO2); alternate linkage. Lysine 373 is subject to N6-acetyllysine. Residues lysine 386, lysine 393, and lysine 399 each participate in a glycyl lysine isopeptide (Lys-Gly) (interchain with G-Cter in SUMO2) cross-link.

This sequence belongs to the universal ribosomal protein uL3 family. As to quaternary structure, component of the large ribosomal subunit. Interacts with DHX33. In terms of processing, constitutively monomethylated at His-245 by METTL18. Methylation at His-245 regulates translation elongation by slowing ribosome traversal on tyrosine codons: slower elongation provides enough time for proper folding of synthesized proteins and prevents cellular aggregation of tyrosine-rich proteins It is not required for incorporation of RPL3 into ribosomes.

It localises to the nucleus. The protein localises to the nucleolus. Its subcellular location is the cytoplasm. Component of the large ribosomal subunit. The ribosome is a large ribonucleoprotein complex responsible for the synthesis of proteins in the cell. The protein is Large ribosomal subunit protein uL3 (RPL3) of Bos taurus (Bovine).